The primary structure comprises 627 residues: (-)-alpha-pinene synthase 1, chloroplastic (627 aa).

The N-terminal 36 residues, 1–36 (MALVSIAPLASKSCLHKSLSSSAHELKTICRTIPTL), are a transit peptide targeting the chloroplast. The Mg(2+) site is built by D378, D382, and D530. The short motif at 378–382 (DDMYD) is the DDXXD motif element.

It belongs to the terpene synthase family. Tpsd subfamily. Requires Mg(2+) as cofactor. Mn(2+) serves as cofactor.

The protein localises to the plastid. It is found in the chloroplast. It catalyses the reaction (2E)-geranyl diphosphate = (1S,5S)-beta-pinene + diphosphate. The catalysed reaction is (2E)-geranyl diphosphate = (1S,5S)-alpha-pinene + diphosphate. It participates in terpene metabolism; oleoresin biosynthesis. Terpene synthase (TPS) involved in the biosynthesis of monoterpene natural products included in conifer oleoresin secretions and volatile emissions; these compounds contribute to biotic and abiotic stress defense against herbivores and pathogens. Catalyzes the conversion of (2E)-geranyl diphosphate (GPP) to (1S,5S)-beta-pinene. In Picea sitchensis (Sitka spruce), this protein is (-)-alpha-pinene synthase 1, chloroplastic.